Consider the following 700-residue polypeptide: Dipeptidyl aminopeptidase 1 (700 aa).

The signal sequence occupies residues 1-27 (MAKRIFSVSFLLVLLNVLHICIKFSVA). N-linked (GlcNAc...) asparagine glycans are attached at residues Asn52, Asn144, Asn265, Asn337, and Asn373. Positions 210–369 (DNVNEIKHLD…SPKRELEINE (160 aa)) are excised as a propeptide. Disulfide bonds link Cys395/Cys446 and Cys439/Cys478. Residue Cys398 is part of the active site. Thr416 carries the sulfothreonine modification. 2 residues coordinate chloride: Phe450 and Tyr452. Asn481, Asn490, and Asn507 each carry an N-linked (GlcNAc...) asparagine glycan. Tyr549 is a chloride binding site. An N-linked (GlcNAc...) asparagine glycan is attached at Asn615. Active-site residues include His624 and Asn648. An N-linked (GlcNAc...) asparagine glycan is attached at Asn667.

The protein belongs to the peptidase C1 family. In terms of assembly, monomer. Chloride serves as cofactor.

The protein resides in the vacuole lumen. The protein localises to the parasitophorous vacuole lumen. The enzyme catalyses Release of an N-terminal dipeptide, Xaa-Yaa-|-Zaa-, except when Xaa is Arg or Lys, or Yaa or Zaa is Pro.. Thiol protease that cleaves dipeptides from the N-terminus of protein substrates. Active against a broad range of dipeptide substrates composed of both polar and hydrophobic amino acids. Proline cannot occupy the P1 position and arginine or lysine cannot occupy the P2 position of the substrate. Involved in host hemoglobin degradation by generating dipeptides from hemoglobin-derived oligopeptides. This chain is Dipeptidyl aminopeptidase 1, found in Plasmodium falciparum (isolate 3D7).